Here is a 430-residue protein sequence, read N- to C-terminus: Transcription factor E2F1 (430 aa).

Positions 62 to 103 are cyclin A:CDK2 binding; it reads ATPQAPRPAPSAPRPALGRPPVKRRLDLETDHQYLAGSSGPF. The interval 84–186 is interaction with BIRC2/c-IAP1; it reads KRRLDLETDH…KKSKNHIQWL (103 aa). Residues 95–123 form a disordered region; sequence YLAGSSGPFRGRGRHPGKGVKSPGEKSRY. The DNA-binding element occupies 105-189; the sequence is GRGRHPGKGV…KNHIQWLGSH (85 aa). Residues lysine 112, lysine 115, and lysine 120 each carry the N6-acetyllysine modification. Positions 148–169 are leucine-zipper; it reads LNWAAEVLKVQKRRIYDITNVL. The DEF box signature appears at 153-189; that stretch reads EVLKVQKRRIYDITNVLEGIQLIAKKSKNHIQWLGSH. Lysine 180 bears the N6-methyllysine; by SETD7 mark. The interval 187–375 is required for interaction with TRIM28; it reads GSHTMVGIGK…QLSPLVAADS (189 aa). Residues 190–279 form a dimerization region; sequence TMVGIGKRLE…AVDSSETFQI (90 aa). Residues 294–340 form a disordered region; it reads PEESADGISPGKTSCQETSSGEDRTADSGPAGPPPSPPSTSPALDPS. Positions 324–333 are enriched in pro residues; that stretch reads AGPPPSPPST. The interval 361–430 is transactivation; that stretch reads PMEEDQLSPL…DFGDLTPLDF (70 aa). A phosphoserine mark is found at serine 368 and serine 396. Residues 402 to 419 are RB1 binding; that stretch reads LDYHFGLEEGEGIRDLFD. Position 426 is a phosphothreonine (threonine 426).

It belongs to the E2F/DP family. Component of the DRTF1/E2F transcription factor complex. Forms heterodimers with DP family members. The E2F1 complex binds specifically hypophosphorylated RB1, the interaction represses E2F1-driven transcription. During the cell cycle, RB1 becomes phosphorylated in mid-to-late G1 phase, detaches from the DRTF1/E2F complex, rendering E2F transcriptionally active. Interacts with TRRAP, which probably mediates its interaction with histone acetyltransferase complexes, leading to transcription activation. Binds TOPBP1 and EAPP. Interacts with ARID3A. Interacts with TRIM28; the interaction inhibits E2F1 acetylation through recruiting HDAC1 and represses its transcriptional activity. Interaction with KAT2B; the interaction acetylates E2F1 enhancing its DNA-binding and transcriptional activity. Interacts with BIRC2/c-IAP1 (via BIR domains). The complex TFDP1:E2F1 interacts with CEBPA; the interaction prevents CEBPA binding to target genes promoters and represses its transcriptional activity. Interacts with RRP1B. Interacts with HCFC1. Interacts with KMT2E; the interaction is probably indirect and is mediated via HCFC1. Interacts with DCAF5 and L3MBTL3; the interaction requires methylation at Lys-180 and is necessary to target E2F1 for ubiquitination by the CRL4-DCAF5 E3 ubiquitin ligase complex. In terms of processing, phosphorylated by CDK2 and cyclin A-CDK2 in the S-phase. Phosphorylation by CHEK2 stabilizes E2F1 upon DNA damage and regulates its effect on transcription and apoptosis. Phosphorylation at Ser-396 by GSK3B promotes interaction with USP11, leading to its deubiquitination and stabilization. Ubiquitinated via 'Lys-63'-linked ubiquitin, leading to its degradation. Deubiquitinated by USP11 following phosphorylation by GSK3B, promoting its stability. Post-translationally, acetylation stimulates DNA-binding. Enhanced under stress conditions such as DNA damage and inhibited by retinoblastoma protein RB1. Regulated by KAP1/TRIM28 which recruits HDAC1 to E2F1 resulting in deacetylation. Acetylated by P/CAF/KAT2B. In terms of processing, methylation at Lys-180 by SETD7 promotes E2F1 ubiquitin-dependent proteasomal degradation.

It localises to the nucleus. BIRC2/c-IAP1 stimulates its transcriptional activity. Transcription activator that binds DNA cooperatively with DP proteins through the E2 recognition site, 5'-TTTC[CG]CGC-3' found in the promoter region of a number of genes whose products are involved in cell cycle regulation or in DNA replication. The DRTF1/E2F complex functions in the control of cell-cycle progression from G1 to S phase. E2F1 binds preferentially RB1 in a cell-cycle dependent manner. It can mediate both cell proliferation and TP53/p53-dependent apoptosis. Blocks adipocyte differentiation by binding to specific promoters repressing CEBPA binding to its target gene promoters. Directly activates transcription of PEG10. Positively regulates transcription of RRP1B. The polypeptide is Transcription factor E2F1 (Mus musculus (Mouse)).